We begin with the raw amino-acid sequence, 156 residues long: 6,7-dimethyl-8-ribityllumazine synthase (156 aa).

5-amino-6-(D-ribitylamino)uracil contacts are provided by residues Phe22, 57–59 (AYE), and 81–83 (TVI). A (2S)-2-hydroxy-3-oxobutyl phosphate-binding site is contributed by 86 to 87 (GT). His89 functions as the Proton donor in the catalytic mechanism. Phe114 is a binding site for 5-amino-6-(D-ribitylamino)uracil. Arg128 provides a ligand contact to (2S)-2-hydroxy-3-oxobutyl phosphate.

The protein belongs to the DMRL synthase family. As to quaternary structure, forms an icosahedral capsid composed of 60 subunits, arranged as a dodecamer of pentamers.

It catalyses the reaction (2S)-2-hydroxy-3-oxobutyl phosphate + 5-amino-6-(D-ribitylamino)uracil = 6,7-dimethyl-8-(1-D-ribityl)lumazine + phosphate + 2 H2O + H(+). The protein operates within cofactor biosynthesis; riboflavin biosynthesis; riboflavin from 2-hydroxy-3-oxobutyl phosphate and 5-amino-6-(D-ribitylamino)uracil: step 1/2. Catalyzes the formation of 6,7-dimethyl-8-ribityllumazine by condensation of 5-amino-6-(D-ribitylamino)uracil with 3,4-dihydroxy-2-butanone 4-phosphate. This is the penultimate step in the biosynthesis of riboflavin. This is 6,7-dimethyl-8-ribityllumazine synthase from Citrobacter koseri (strain ATCC BAA-895 / CDC 4225-83 / SGSC4696).